An 83-amino-acid chain; its full sequence is RNA-binding protein Hfq (83 aa).

One can recognise a Sm domain in the interval 11-71; the sequence is DTFLNHVRKN…ISTIMPGHPV (61 aa).

This sequence belongs to the Hfq family. Homohexamer.

RNA chaperone that binds small regulatory RNA (sRNAs) and mRNAs to facilitate mRNA translational regulation in response to envelope stress, environmental stress and changes in metabolite concentrations. Also binds with high specificity to tRNAs. The sequence is that of RNA-binding protein Hfq from Methylobacterium radiotolerans (strain ATCC 27329 / DSM 1819 / JCM 2831 / NBRC 15690 / NCIMB 10815 / 0-1).